Here is a 305-residue protein sequence, read N- to C-terminus: Cysteine synthase (305 aa).

K45 carries the N6-(pyridoxal phosphate)lysine modification. Pyridoxal 5'-phosphate contacts are provided by residues N75, 179–183 (GSGGT), and S266.

This sequence belongs to the cysteine synthase/cystathionine beta-synthase family. As to quaternary structure, homodimer. Pyridoxal 5'-phosphate serves as cofactor.

It carries out the reaction O-acetyl-L-serine + hydrogen sulfide = L-cysteine + acetate. Its pathway is amino-acid biosynthesis; L-cysteine biosynthesis; L-cysteine from L-serine: step 2/2. The protein is Cysteine synthase (cysM) of Helicobacter pylori (strain J99 / ATCC 700824) (Campylobacter pylori J99).